An 83-amino-acid chain; its full sequence is Toxin Aam1 (83 aa).

Residues 1–19 form the signal peptide; sequence MNYLVMISLALLLMIGVES. The 62-residue stretch at 21-82 folds into the LCN-type CS-alpha/beta domain; sequence RDGYIVYPHN…PIYDRSYKCY (62 aa). Cystine bridges form between C31–C81, C35–C53, C39–C63, and C43–C65.

This sequence belongs to the long (4 C-C) scorpion toxin superfamily. Sodium channel inhibitor family. Alpha subfamily. The C-terminal basic residue is removed by a carboxypeptidase. Expressed by the venom gland.

The protein resides in the secreted. Alpha toxins bind voltage-independently at site-3 of sodium channels (Nav) and inhibit the inactivation of the activated channels, thereby blocking neuronal transmission. The polypeptide is Toxin Aam1 (H1) (Androctonus amoreuxi (African fattail scorpion)).